A 718-amino-acid chain; its full sequence is Interleukin-1 receptor-associated kinase 1 (718 aa).

Residues 27 to 106 form the Death domain; that stretch reads MCRFYKVMDA…DIITAWHPPA (80 aa). Thr66 is subject to Phosphothreonine; by PKC/PRKCI. The tract at residues 110-211 is proST region; that stretch reads PPSTTSLTPS…LHEICQGTHD (102 aa). Residue Lys134 forms a Glycyl lysine isopeptide (Lys-Gly) (interchain with G-Cter in ubiquitin) linkage. Positions 146–188 are disordered; it reads AFPGSQTHSDPELCPGPSPAAHQPPLPSPAPSSTKPSPESPMS. Residues 159-175 are compositionally biased toward pro residues; it reads CPGPSPAAHQPPLPSPA. The span at 176–188 shows a compositional bias: low complexity; it reads PSSTKPSPESPMS. Residue Lys180 forms a Glycyl lysine isopeptide (Lys-Gly) (interchain with G-Cter in ubiquitin) linkage. Thr209 is modified (phosphothreonine; by IRAK4). The Protein kinase domain maps to 212–521; it reads FSEELKIGEG…TQVYQTLEEL (310 aa). ATP is bound by residues 218 to 226 and Lys239; that span reads IGEGGFGCV. The active-site Proton acceptor is the Asp340. ATP-binding positions include 342–345 and Asp358; that span reads KSSN. Ser375 bears the Phosphoserine mark. Thr387 bears the Phosphothreonine mark. Residues 534–554 are disordered; sequence AASRSPPSPQENSYVSTSGSA. Over residues 543 to 554 the composition is skewed to polar residues; the sequence is QENSYVSTSGSA. The residue at position 556 (Ser556) is a Phosphoserine. Disordered regions lie at residues 569–594, 631–662, and 692–718; these read GAQAQATDWPQKGANQPVESDESVSD, GAARESSCGSGPGLQPTAVEGPLLGSSMSSRP, and LSSSSLPDSGQDLQDRQGPEERDEFRS. Positions 692-703 are enriched in low complexity; that stretch reads LSSSSLPDSGQD. The span at 704-718 shows a compositional bias: basic and acidic residues; it reads LQDRQGPEERDEFRS.

It belongs to the protein kinase superfamily. TKL Ser/Thr protein kinase family. Pelle subfamily. In terms of assembly, homodimer. Forms a complex with TRAF6, PELI1, IRAK4 and MYD88. Direct binding of SMAD6 to PELI1 prevents complex formation and hence negatively regulates IL1R-TLR signaling and eventually NF-kappa-B-mediated gene expression. The TRAF6-PELI1-IRAK1-IRAK4-MYD88 complex recruits MAP3K7/TAK1, TAB1 and TAB2 to mediate NF-kappa-B activation. Interaction with MYD88 recruits IRAK1 to the stimulated receptor complex. Interacts with TOLLIP; this interaction occurs in the cytosol prior to receptor activation. Interacts with IL1RL1. Interacts (when polyubiquitinated) with IKBKG/NEMO. Interacts with RSAD2/viperin. Interacts with IRAK1BP1. Interacts with PELI2. Interacts with ZC3H12A; this interaction increases the interaction between ZC3H12A and IKBKB/IKKB. Interacts with IRAK4. Interacts with PELI3. Interacts with PELI1 and TRAF6. Interacts with INAVA; the interaction takes place upon PRR stimulation. Interacts (via C-terminus) with NFATC4 (via N-terminus). Requires Mg(2+) as cofactor. In terms of processing, following recruitment on the activated receptor complex, phosphorylated on Thr-209, probably by IRAK4, resulting in a conformational change of the kinase domain, allowing further phosphorylations to take place. Thr-387 phosphorylation in the activation loop is required to achieve full enzymatic activity. Polyubiquitinated by TRAF6 after cell stimulation with IL-1-beta by PELI1, PELI2 and PELI3. Polyubiquitination occurs with polyubiquitin chains linked through 'Lys-63'. Ubiquitination promotes interaction with NEMO/IKBKG. Also sumoylated; leading to nuclear translocation.

The protein localises to the cytoplasm. It localises to the nucleus. It is found in the lipid droplet. It catalyses the reaction L-seryl-[protein] + ATP = O-phospho-L-seryl-[protein] + ADP + H(+). The enzyme catalyses L-threonyl-[protein] + ATP = O-phospho-L-threonyl-[protein] + ADP + H(+). Functionally, serine/threonine-protein kinase that plays a critical role in initiating innate immune response against foreign pathogens. Involved in Toll-like receptor (TLR) and IL-1R signaling pathways. Is rapidly recruited by MYD88 to the receptor-signaling complex upon TLR activation. Association with MYD88 leads to IRAK1 phosphorylation by IRAK4 and subsequent autophosphorylation and kinase activation. Phosphorylates E3 ubiquitin ligases Pellino proteins (PELI1, PELI2 and PELI3) to promote pellino-mediated polyubiquitination of IRAK1. Then, the ubiquitin-binding domain of IKBKG/NEMO binds to polyubiquitinated IRAK1 bringing together the IRAK1-MAP3K7/TAK1-TRAF6 complex and the NEMO-IKKA-IKKB complex. In turn, MAP3K7/TAK1 activates IKKs (CHUK/IKKA and IKBKB/IKKB) leading to NF-kappa-B nuclear translocation and activation. Alternatively, phosphorylates TIRAP to promote its ubiquitination and subsequent degradation. Phosphorylates the interferon regulatory factor 7 (IRF7) to induce its activation and translocation to the nucleus, resulting in transcriptional activation of type I IFN genes, which drive the cell in an antiviral state. When sumoylated, translocates to the nucleus and phosphorylates STAT3. In Bos taurus (Bovine), this protein is Interleukin-1 receptor-associated kinase 1 (IRAK1).